The following is a 6631-amino-acid chain: Replicase polyprotein 1ab (6631 aa).

Residues 1–1752 (MASSLKQGVS…VSSYKIVLCK (1752 aa)) lie on the Cytoplasmic side of the membrane. Ubiquitin-like domains lie at 675-780 (KTVT…RDYE) and 1177-1229 (CKQK…ILFI). The 177-residue stretch at 1005-1181 (VKPATCEKPK…YFDATCKQKT (177 aa)) folds into the Macro domain. The 262-residue stretch at 1238–1499 (EYYGLDAQKY…AKVVKEDVSN (262 aa)) folds into the Peptidase C16 domain. Cys1276 acts as the For PL-PRO activity in catalysis. Residues 1355-1392 (CNCGVKSYELRGLEACIQPVRAPNLLHFKTQYSNCPTC) form a C4-type; degenerate zinc finger. Residues His1439 and Asp1450 each act as for PL-PRO activity in the active site. A helical membrane pass occupies residues 1753–1773 (VVFATLLIVWFIYTSNPVVFT). The segment at 1753–1866 (VVFATLLIVW…KPVAGFVIIC (114 aa)) is HD1. One can recognise a 3Ecto domain in the interval 1771-1835 (VFTGIRVLDF…AYSVEQIYKD (65 aa)). The Lumenal portion of the chain corresponds to 1774–1845 (GIRVLDFLFE…AASGINFNWN (72 aa)). Cystine bridges form between Cys1787–Cys1813 and Cys1804–Cys1810. Residues 1846–1866 (WLYLVFLILFVKPVAGFVIIC) form a helical membrane-spanning segment. Residues 1867–2282 (YCVKYLVLSS…TFKWFMSCFK (416 aa)) lie on the Cytoplasmic side of the membrane. The tract at residues 1913–2003 (YVQVHHILYC…KLKRHVKPTA (91 aa)) is Y1. A CoV Nsp3 Y domain is found at 1913–2265 (YVQVHHILYC…HTQKLLVEKK (353 aa)). The Zn(2+) site is built by His1917, Cys1922, Cys1927, Cys1930, Cys1963, His1966, Cys1970, and Cys1973. The ZF1 stretch occupies residues 1917-1930 (HHILYCKDVTCEVC). The tract at residues 1963–1973 (CKRHNWYCRNC) is ZF2. Positions 2004 to 2106 (YAYHVVYEAC…ILDQALYEQL (103 aa)) are Y2. The segment at 2004–2265 (YAYHVVYEAC…HTQKLLVEKK (262 aa)) is coV-Y. The segment at 2107-2165 (IVEPVSKSVIDKVCSILSNIISVDTAALNYKAGTLRDALLSITKDEEAVDMAIFCHNHE) is Y3. The Y4 stretch occupies residues 2166-2265 (VEYTGDGFTN…HTQKLLVEKK (100 aa)). Residues 2283 to 2303 (WLFVFYILFTACCLGYYYMEM) form a helical membrane-spanning segment. Residues 2283–2666 (WLFVFYILFT…LACCYLGFIL (384 aa)) are HD2. Topologically, residues 2304-2561 (NKSFVHPMYD…FFTGVNPNIY (258 aa)) are lumenal. The chain crosses the membrane as a helical span at residues 2562-2582 (IQLATMFLILVVIVLIFAMVI). Residues 2583–2613 (KFQGVFKAYATIVFTIMLVWVINAFVLCVHS) are Cytoplasmic-facing. The chain crosses the membrane as a helical span at residues 2614–2634 (YNSVLAVILLVLYCYASMVTS). The Lumenal segment spans residues 2635–2645 (RNTAIIMHCWL). A helical transmembrane segment spans residues 2646-2666 (VFTFGLIVPTWLACCYLGFIL). Residues 2667 to 3098 (YMYTPLVFWC…SSFVRKATSW (432 aa)) are Cytoplasmic-facing. Residues 2686–2781 (LYDGNEFVGN…RYSIGVSRLQ (96 aa)) enclose the Nsp4C domain. The Peptidase C30 domain occupies 2782–3088 (AGFKKLVSPS…FNQVGGVRLQ (307 aa)). Residues His2822 and Cys2924 each act as for 3CL-PRO activity in the active site. The helical transmembrane segment at 3099–3119 (FWSRCVLACFLFVLCAIVLFT) threads the bilayer. Residues 3099-3319 (FWSRCVLACF…WLCTCYFGLY (221 aa)) form an HD3 region. Residues 3120–3123 (AVPL) lie on the Lumenal side of the membrane. A helical transmembrane segment spans residues 3124-3144 (KFYVHAAVILLMAVLFISFTV). Over 3145–3153 (KHVMAYMDT) the chain is Cytoplasmic. The chain crosses the membrane as a helical span at residues 3154–3174 (FLLPTLITVIIGVCAEVPFIY). Residues 3175–3190 (NTLISQVVIFLSQWYD) are Lumenal-facing. The helical transmembrane segment at 3191–3211 (PVVFDTMVPWMLLPLVLYTAF) threads the bilayer. Residues 3212–3259 (KCVQGCYMNSFNTSLLMLYQFMKLGFVIYTSSNTLTAYTEGNWELFFE) are Cytoplasmic-facing. The helical transmembrane segment at 3260 to 3280 (LVHTIVLANVSSNSLIGLIVF) threads the bilayer. Topologically, residues 3281–3298 (KCAKWMLYYCNATYFNNY) are lumenal. Residues 3299–3319 (VLMAVMVNGIGWLCTCYFGLY) traverse the membrane as a helical segment. Over 3320 to 6631 (WWVNKVFGLT…FTSDSFVCTM (3312 aa)) the chain is Cytoplasmic. The 83-residue stretch at 3382 to 3464 (SKLSDVKCTT…DILKRSTVLQ (83 aa)) folds into the RdRp Nsp7 cofactor domain. A RdRp Nsp8 cofactor domain is found at 3465-3674 (SVTQEFSHIP…GHNKVDVALQ (210 aa)). The Nsp9 ssRNA-binding domain maps to 3675–3785 (NNELMPHGVK…GAISNVVVLQ (111 aa)). The ExoN/MTase coactivator domain maps to 3787 to 3928 (KGHETEEVDA…CDSLRQPKPS (142 aa)). Zn(2+)-binding residues include Cys3860, Cys3863, His3869, Cys3880, Cys3906, Cys3909, Cys3917, and Cys3919. 2 zinc fingers span residues 3860–3880 (CLYC…DGRC) and 3906–3919 (CTVC…GCQC). Positions 3942 to 4200 (YLNRVRGSSE…APERYFEYDV (259 aa)) constitute a NiRAN domain. The 99-residue stretch at 4205–4303 (KSYDLLKYDY…MNQDNTMSFS (99 aa)) folds into the Nsp12 Interface domain. Zn(2+)-binding residues include His4234, Cys4240, Cys4245, Cys4249, and Cys4426. Residues 4304–4870 (KMGLSQLMQF…NMYRAPTTLQ (567 aa)) form the Nsp12 RNA-dependent RNA polymerase domain. The tract at residues 4306-4519 (GLSQLMQFVG…HQKILKSIVN (214 aa)) is rdRp Fingers N-ter. The rdRp Palm N-ter stretch occupies residues 4520-4558 (TRNAPVVIGTTKFYGGWDNMLRNLIQGVEDPILMGWDYP). The RdRp catalytic domain maps to 4550-4712 (PILMGWDYPK…CYNNTLAKQG (163 aa)). The rdRp Fingers C-ter stretch occupies residues 4559–4617 (KCDRAMPNLLRIAASLVLARKHTNCCTWSERVYRLYNECAQVLSETVLATGGIYVKPGG). The Zn(2+) site is built by His4580, Cys4583, and Cys4584. Residues 4618–4753 (TSSGDATTAY…EKGPHEFCSQ (136 aa)) are rdRp Palm C-ter. Active-site residues include Ser4697, Asp4698, and Asp4699. Residues 4754–4870 (HTMLVEVDGE…NMYRAPTTLQ (117 aa)) form a rdRp Thumb region. One can recognise a CV ZBD domain in the interval 4871–4983 (SCGVCVVCNS…DDFNQLATTN (113 aa)). Zn(2+)-binding residues include Cys4875, Cys4878, Cys4886, Cys4889, Cys4896, Cys4899, His4903, His4909, Cys4920, Cys4925, Cys4942, and His4945. Positions 5127–5307 (MVPACFVNNI…MVCVKPDIFL (181 aa)) constitute a (+)RNA virus helicase ATP-binding domain. 5152-5159 (GPPGSGKS) serves as a coordination point for ATP. One can recognise a (+)RNA virus helicase C-terminal domain in the interval 5308 to 5479 (AKCYRCPKEI…QGTGLFKICN (172 aa)). An ExoN domain is found at 5541–5755 (MFITRDEAIR…RCLAINNAFC (215 aa)). Active-site residues include Asp5559, Glu5561, and Glu5660. 7 residues coordinate Zn(2+): Cys5676, Cys5678, Cys5694, His5697, His5725, Cys5729, and His5732. Active-site residues include His5736 and Asp5741. Zn(2+) is bound at residue Cys5747. An N7-MTase domain is found at 5764-5991 (YPHIANEDEV…NLWKSFSALQ (228 aa)). 5799–5805 (DIGNPKG) serves as a coordination point for S-adenosyl-L-methionine. The interval 5879–5893 (CNGGSLYVNKHAFHT) is gpppA-binding. Cys5917, Cys5937, Cys5948, and His5951 together coordinate Zn(2+). A Nsp15 N-terminal oligomerization domain is found at 5992–6052 (SIDNIAYNMY…SVAFELYAKR (61 aa)). Residues 6053-6168 (NIRTLPNNRI…VYKRVNGAFV (116 aa)) form the AV-Nsp11N/CoV-Nsp15M domain. The region spanning 6185–6326 (EPRSDVERDF…EDGIIKTCYP (142 aa)) is the NendoU domain. Catalysis depends on residues His6214, His6229, Lys6269, Lys6373, Asp6457, Lys6501, and Glu6534. The Nidovirus-type SAM-dependent 2'-O-MTase domain maps to 6329 to 6628 (QSAWTCGYNM…NTSFTSDSFV (300 aa)).

This sequence belongs to the coronaviruses polyprotein 1ab family. In terms of assembly, interacts with host PHB and PHB2. Interacts with papain-like protease and non-structural protein 6. As to quaternary structure, monomer. Homodimer. Only the homodimer shows catalytic activity. In terms of assembly, eight copies of nsp7 and eight copies of nsp8 assemble to form a heterohexadecamer dsRNA-encircling ring structure. Eight copies of nsp7 and eight copies of nsp8 assemble to form a heterohexadecamer dsRNA-encircling ring structure. Interacts with ORF6 protein. As to quaternary structure, homodimer. In terms of assembly, homododecamer. Interacts with proofreading exoribonuclease nsp14 and 2'-O-methyltransferase nsp16; these interactions enhance nsp14 and nsp16 enzymatic activities. Interacts with host DDX1 (via C-terminus). Interacts with non-structural protein 10. As to quaternary structure, homohexamer. In terms of assembly, interacts with non-structural protein 10. The cofactor is Mn(2+). Requires Zn(2+) as cofactor. Post-translationally, specific enzymatic cleavages in vivo by its own proteases yield mature proteins. 3C-like proteinase nsp5 liberates nsps 6-16 from the polyprotein. Papain-like and 3C-like proteinases are autocatalytically processed. In terms of processing, N-glycosylated.

Its subcellular location is the host endoplasmic reticulum membrane. The protein localises to the host cytoplasm. It is found in the host perinuclear region. The protein resides in the host endoplasmic reticulum. It localises to the host endoplasmic reticulum-Golgi intermediate compartment. It carries out the reaction Thiol-dependent hydrolysis of ester, thioester, amide, peptide and isopeptide bonds formed by the C-terminal Gly of ubiquitin (a 76-residue protein attached to proteins as an intracellular targeting signal).. It catalyses the reaction RNA(n) + a ribonucleoside 5'-triphosphate = RNA(n+1) + diphosphate. The catalysed reaction is ATP + H2O = ADP + phosphate + H(+). The enzyme catalyses a 5'-end diphospho-ribonucleoside in mRNA + GTP + H(+) = a 5'-end (5'-triphosphoguanosine)-ribonucleoside in mRNA + diphosphate. It carries out the reaction uridylyl-uridylyl-ribonucleotide-RNA = a 3'-end uridylyl-2',3'-cyclophospho-uridine-RNA + a 5'-end dephospho-ribonucleoside-RNA. It catalyses the reaction a 5'-end (N(7)-methyl 5'-triphosphoguanosine)-ribonucleoside in mRNA + S-adenosyl-L-methionine = a 5'-end (N(7)-methyl 5'-triphosphoguanosine)-(2'-O-methyl-ribonucleoside) in mRNA + S-adenosyl-L-homocysteine + H(+). Functionally, multifunctional protein involved in the transcription and replication of viral RNAs. Contains the proteinases responsible for the cleavages of the polyprotein. May play a role in the modulation of host cell survival signaling pathway by interacting with host PHB and PHB2. Indeed, these two proteins play a role in maintaining the functional integrity of the mitochondria and protecting cells from various stresses. In terms of biological role, responsible for the cleavages located at the N-terminus of the replicase polyprotein. In addition, PL-PRO possesses a deubiquitinating/deISGylating activity and processes both 'Lys-48'- and 'Lys-63'-linked polyubiquitin chains from cellular substrates. Its function is as follows. Plays a role in host membrane rearrangement that leads to creation of cytoplasmic double-membrane vesicles (DMV) necessary for viral replication. Alone is able to induce paired membranes. Coexpression of nsp3 and nsp4 does not result in the formation of DMVs. Functionally, responsible for the majority of cleavages as it cleaves the C-terminus of replicase polyprotein at 11 sites. Recognizes substrates containing the core sequence [ILMVF]-Q-|-[SGACN]. Inhibited by the substrate-analog Cbz-Val-Asn-Ser-Thr-Leu-Gln-CMK. Forms a hexadecamer with nsp8 (8 subunits of each) that may participate in viral replication by acting as a primase. Alternatively, may synthesize substantially longer products than oligonucleotide primers. In terms of biological role, forms a hexadecamer with nsp7 (8 subunits of each) that may participate in viral replication by acting as a primase. Alternatively, may synthesize substantially longer products than oligonucleotide primers. Its function is as follows. Forms a primer, NSP9-pU, which is utilized by the polymerase for the initiation of RNA chains. Interacts with ribosome signal recognition particle RNA (SRP). Together with NSP8, suppress protein integration into the cell membrane, thereby disrupting host immune defenses. Functionally, plays a pivotal role in viral transcription by stimulating both nsp14 3'-5' exoribonuclease and nsp16 2'-O-methyltransferase activities. Therefore plays an essential role in viral mRNAs cap methylation. RNA-directed RNA polymerase that catalyzes the transcription of viral genomic and subgenomic RNAs. Acts in complex with nsp7 and nsp8 to transcribe both the minus and positive strands of genomic RNA. The kinase-like NiRAN domain of NSP12 attaches one or more nucleotides to the amino terminus of NSP9, forming a covalent RNA-protein intermediate that serves as transcription/replication primer. Subgenomic RNAs (sgRNAs) are formed by discontinuous transcription: The polymerase has the ability to pause at transcription-regulating sequences (TRS) and jump to the leader TRS, resulting in a major deletion. This creates a series of subgenomic RNAs that are replicated, transcribed and translated. In addition, Nsp12 is a subunit of the viral RNA capping enzyme that catalyzes the RNA guanylyltransferase reaction for genomic and sub-genomic RNAs. Subsequently, the NiRAN domain transfers RNA to GDP, and forms the core cap structure GpppA-RNA. In terms of biological role, multi-functional protein with a zinc-binding domain in N-terminus displaying RNA and DNA duplex-unwinding activities with 5' to 3' polarity. Activity of helicase is dependent on magnesium. Its function is as follows. Enzyme possessing two different activities: an exoribonuclease activity acting on both ssRNA and dsRNA in a 3' to 5' direction and a N7-guanine methyltransferase activity. Acts as a proofreading exoribonuclease for RNA replication, thereby lowering The sensitivity of the virus to RNA mutagens. Functionally, plays a role in viral transcription/replication and prevents the simultaneous activation of host cell dsRNA sensors, such as MDA5/IFIH1, OAS, and PKR. Acts by degrading the 5'-polyuridines generated during replication of the poly(A) region of viral genomic and subgenomic RNAs. Catalyzes a two-step reaction in which a 2'3'-cyclic phosphate (2'3'-cP) is first generated by 2'-O transesterification, which is then hydrolyzed to a 3'-phosphate (3'-P). If not degraded, poly(U) RNA would hybridize with poly(A) RNA tails and activate host dsRNA sensors. Methyltransferase that mediates mRNA cap 2'-O-ribose methylation to the 5'-cap structure of viral mRNAs. N7-methyl guanosine cap is a prerequisite for binding of nsp16. Therefore plays an essential role in viral mRNAs cap methylation which is essential to evade immune system. This Gallus gallus (Chicken) protein is Replicase polyprotein 1ab (rep).